The chain runs to 420 residues: Interleukin-5 receptor subunit alpha (420 aa).

Residues 1–20 form the signal peptide; it reads MIIVAHVLLILLGATEILQA. Residues 21–342 lie on the Extracellular side of the membrane; sequence DLLPDEKISL…NDEHKPLREW (322 aa). Positions 32–123 constitute a Fibronectin type-III 1 domain; sequence PPVNFTIKVT…ASAELHAPPG (92 aa). N-linked (GlcNAc...) asparagine glycans are attached at residues asparagine 35 and asparagine 131. 2 disulfides stabilise this stretch: cysteine 134-cysteine 155 and cysteine 182-cysteine 196. 2 N-linked (GlcNAc...) asparagine glycosylation sites follow: asparagine 216 and asparagine 244. Positions 241–334 constitute a Fibronectin type-III 2 domain; that stretch reads PPLNVTAEIE…WSQPIYVGND (94 aa). Cysteine 269 and cysteine 316 are joined by a disulfide. The WSXWS motif signature appears at 322-326; it reads WSEWS. The chain crosses the membrane as a helical span at residues 343–362; that stretch reads FVIVIMATICFILLILSLIC. The Cytoplasmic segment spans residues 363 to 420; sequence KICHLWIKLFPPIPAPKSNIKDLFVTTNYEKAGSSETEIEVICYIEKPGVETLEDSVF. Residues 371-379 carry the Box 1 motif motif; it reads LFPPIPAPK.

This sequence belongs to the type I cytokine receptor family. Type 5 subfamily. As to quaternary structure, interacts with IL5. Interacts with CSF2RB. Interacts with JAK2. Interacts with SDCBP. Expressed on eosinophils and basophils.

Its subcellular location is the membrane. In terms of biological role, cell surface receptor that plays an important role in the survival, differentiation, and chemotaxis of eosinophils. Acts by forming a heterodimeric receptor with CSF2RB subunit and subsequently binding to interleukin-5. In unstimulated conditions, interacts constitutively with JAK2. Heterodimeric receptor activation leads to JAK2 stimulation and subsequent activation of the JAK-STAT pathway. The protein is Interleukin-5 receptor subunit alpha (IL5RA) of Homo sapiens (Human).